The sequence spans 553 residues: Protein spartin (553 aa).

One can recognise an MIT domain in the interval 15 to 96; the sequence is IRTAYKAAMT…ETELRYRLKV (82 aa). The tract at residues 105-130 is disordered; the sequence is DDSAVEATEESRAEMDTKRPPLLAEN. Positions 113–123 are enriched in basic and acidic residues; that stretch reads EESRAEMDTKR. In terms of domain architecture, Senescence spans 325-509; the sequence is IVSAADFIAS…SQNVNYITPK (185 aa).

Interacts with Eps-15 (via C-terminal region); the interaction is required for spartin localization to the NMJ presynaptic membrane. In terms of tissue distribution, expressed in larval brain, ventral nerve cord and neuropil (at protein level).

Its subcellular location is the presynaptic cell membrane. It is found in the early endosome. The protein resides in the lipid droplet. During postembryonic development, functions with endocytic adapter Eps-15 in neurons to restrain synaptic growth, by inhibiting BMP signaling, and to control synaptic endocytosis. Required presynaptically for neuromuscular junction (NMJ) neurotransmission. Inhibits neuronal BMP signaling by promoting endocytic internalization and subsequent endosomal trafficking of the BMP receptor wit. In this way, regulates the Fmr1 translational regulator controlling Futsch expression to modulate neuronal microtubule stability, which controls both synaptogenesis and neuronal survival. The polypeptide is Protein spartin (Drosophila melanogaster (Fruit fly)).